We begin with the raw amino-acid sequence, 702 residues long: Ribosomal RNA large subunit methyltransferase K/L (702 aa).

Positions 43–154 (LVYQSLMWSR…KETASIALDL (112 aa)) constitute a THUMP domain.

It belongs to the methyltransferase superfamily. RlmKL family.

Its subcellular location is the cytoplasm. It carries out the reaction guanosine(2445) in 23S rRNA + S-adenosyl-L-methionine = N(2)-methylguanosine(2445) in 23S rRNA + S-adenosyl-L-homocysteine + H(+). The catalysed reaction is guanosine(2069) in 23S rRNA + S-adenosyl-L-methionine = N(2)-methylguanosine(2069) in 23S rRNA + S-adenosyl-L-homocysteine + H(+). Specifically methylates the guanine in position 2445 (m2G2445) and the guanine in position 2069 (m7G2069) of 23S rRNA. The protein is Ribosomal RNA large subunit methyltransferase K/L of Escherichia coli (strain K12 / DH10B).